A 1023-amino-acid polypeptide reads, in one-letter code: Phosphoenolpyruvate carboxylase (1023 aa).

Active-site residues include His199 and Lys669.

This sequence belongs to the PEPCase type 1 family. It depends on Mg(2+) as a cofactor.

The enzyme catalyses oxaloacetate + phosphate = phosphoenolpyruvate + hydrogencarbonate. Functionally, forms oxaloacetate, a four-carbon dicarboxylic acid source for the tricarboxylic acid cycle. This chain is Phosphoenolpyruvate carboxylase, found in Trichormus variabilis (strain ATCC 29413 / PCC 7937) (Anabaena variabilis).